A 155-amino-acid chain; its full sequence is Cytochrome c-type biogenesis protein CcmE (155 aa).

Residues 1–8 are Cytoplasmic-facing; that stretch reads MNPVRKRR. A helical; Signal-anchor for type II membrane protein membrane pass occupies residues 9-29; that stretch reads LFIVLAILAGVGAAVALALSA. The Periplasmic portion of the chain corresponds to 30 to 155; it reads LQQNINLFYT…YENGKPGGAQ (126 aa). Heme contacts are provided by His124 and Tyr128.

Belongs to the CcmE/CycJ family.

The protein localises to the cell inner membrane. Its function is as follows. Heme chaperone required for the biogenesis of c-type cytochromes. Transiently binds heme delivered by CcmC and transfers the heme to apo-cytochromes in a process facilitated by CcmF and CcmH. In Azotobacter vinelandii (strain DJ / ATCC BAA-1303), this protein is Cytochrome c-type biogenesis protein CcmE.